The following is a 345-amino-acid chain: Proto-oncogene serine/threonine-protein kinase mos (345 aa).

Positions 63 to 344 constitute a Protein kinase domain; that stretch reads VCLLQRLGAG…LDLRALQAEL (282 aa). ATP contacts are provided by residues 69–77 and Lys90; that span reads LGAGGFGSV. The Proton acceptor role is filled by Asp202.

Belongs to the protein kinase superfamily. Ser/Thr protein kinase family. In terms of assembly, interacts with MAP2K1/MEK1. As to expression, restricted to gonadal tissues.

The protein localises to the cytoplasm. It catalyses the reaction L-seryl-[protein] + ATP = O-phospho-L-seryl-[protein] + ADP + H(+). The enzyme catalyses L-threonyl-[protein] + ATP = O-phospho-L-threonyl-[protein] + ADP + H(+). Functionally, serine/threonine kinase involved in the regulation of MAPK signaling. Is an activator of the ERK1/2 signaling cascade playing an essential role in the stimulation of oocyte maturation. This chain is Proto-oncogene serine/threonine-protein kinase mos, found in Sus scrofa (Pig).